Here is a 134-residue protein sequence, read N- to C-terminus: Ribonuclease VapC1 (134 aa).

Residues 3–132 (YMLDTNIIIY…RITDLQWQDW (130 aa)) enclose the PINc domain. 2 residues coordinate Mg(2+): D6 and D99.

The protein belongs to the PINc/VapC protein family. The cofactor is Mg(2+).

Its function is as follows. Toxic component of a type II toxin-antitoxin (TA) system. Acts as an RNase, its toxic effect is neutralized by VapB1 antitoxin. The polypeptide is Ribonuclease VapC1 (Haemophilus influenzae (strain ATCC 51907 / DSM 11121 / KW20 / Rd)).